A 343-amino-acid polypeptide reads, in one-letter code: C-X-C chemokine receptor type 6 (343 aa).

Residues 1–33 are Extracellular-facing; the sequence is MAEYDHYEDDEFFNSFNDSSQKEHQDFLQFSKV. A glycan (N-linked (GlcNAc...) asparagine) is linked at N17. A helical membrane pass occupies residues 34–60; it reads FLPCMYLVVFVCGLVGNSLVLVISIFY. Residues 61 to 69 are Cytoplasmic-facing; that stretch reads HKLQSLTDV. The helical transmembrane segment at 70 to 90 threads the bilayer; sequence FLVNLPLADLVFVCTLPFWAY. The Extracellular portion of the chain corresponds to 91–104; sequence AGIHEWIFGQVMCK. C103 and C181 are disulfide-bonded. The chain crosses the membrane as a helical span at residues 105 to 126; the sequence is TLLGVYTINFYTSMLILTCITV. The Cytoplasmic segment spans residues 127–144; sequence DRFIVVVKATKAYNQQAK. The helical transmembrane segment at 145–165 threads the bilayer; sequence RMTWGKVICLLIWVISLLVSL. The Extracellular portion of the chain corresponds to 166–188; that stretch reads PQIIYGNVFNLDKLICRYHDEEI. A helical transmembrane segment spans residues 189–216; sequence STVVLATQMTLGFFLPLLTMIVCYSVII. The Cytoplasmic portion of the chain corresponds to 217-232; that stretch reads KTLLHAGGFQKHRSLK. The chain crosses the membrane as a helical span at residues 233–260; sequence IIFLVMAVFLLTQTPFNLVKLIRSTHWE. The Extracellular segment spans residues 261-276; that stretch reads YYAMTSFHYTIIVTEA. The helical transmembrane segment at 277–294 threads the bilayer; that stretch reads IAYLRACLNPVLYAFVSL. Topologically, residues 295 to 343 are cytoplasmic; that stretch reads KFRKNFWKLVKDIGCLPYLGVSHQWKSSEDNSKTFSASHNVEATSMFQL.

The protein belongs to the G-protein coupled receptor 1 family.

The protein localises to the cell membrane. Receptor for the C-X-C chemokine CXCL16. Used as a coreceptor by SIVs and by strains of HIV-2 and m-tropic HIV-1. The chain is C-X-C chemokine receptor type 6 (CXCR6) from Cercocebus atys (Sooty mangabey).